The chain runs to 61 residues: Small ribosomal subunit protein uS14B (61 aa).

Zn(2+) contacts are provided by Cys-24, Cys-27, Cys-40, and Cys-43.

This sequence belongs to the universal ribosomal protein uS14 family. Zinc-binding uS14 subfamily. Part of the 30S ribosomal subunit. Contacts proteins S3 and S10. Zn(2+) serves as cofactor.

Its function is as follows. Binds 16S rRNA, required for the assembly of 30S particles and may also be responsible for determining the conformation of the 16S rRNA at the A site. The chain is Small ribosomal subunit protein uS14B from Myxococcus xanthus (strain DK1622).